The primary structure comprises 151 residues: Large ribosomal subunit protein bL9 (151 aa).

Belongs to the bacterial ribosomal protein bL9 family.

Its function is as follows. Binds to the 23S rRNA. This Acidobacterium capsulatum (strain ATCC 51196 / DSM 11244 / BCRC 80197 / JCM 7670 / NBRC 15755 / NCIMB 13165 / 161) protein is Large ribosomal subunit protein bL9.